A 314-amino-acid chain; its full sequence is Methionyl-tRNA formyltransferase (314 aa).

Ser-112–Pro-115 lines the (6S)-5,6,7,8-tetrahydrofolate pocket.

The protein belongs to the Fmt family.

It carries out the reaction L-methionyl-tRNA(fMet) + (6R)-10-formyltetrahydrofolate = N-formyl-L-methionyl-tRNA(fMet) + (6S)-5,6,7,8-tetrahydrofolate + H(+). Functionally, attaches a formyl group to the free amino group of methionyl-tRNA(fMet). The formyl group appears to play a dual role in the initiator identity of N-formylmethionyl-tRNA by promoting its recognition by IF2 and preventing the misappropriation of this tRNA by the elongation apparatus. This Legionella pneumophila (strain Paris) protein is Methionyl-tRNA formyltransferase.